The chain runs to 331 residues: Ketol-acid reductoisomerase (NADP(+)) (331 aa).

In terms of domain architecture, KARI N-terminal Rossmann spans 2-182 (AQLFYDSDAD…GGTRAGILET (181 aa)). NADP(+)-binding positions include 25 to 28 (YGSQ), S51, S53, and 83 to 86 (DEFQ). Residue H108 is part of the active site. G134 contributes to the NADP(+) binding site. Residues 183-328 (NFKEETETDL…KGLRSMFSWL (146 aa)) form the KARI C-terminal knotted domain. Mg(2+) contacts are provided by D191, E195, E227, and E231. S252 is a substrate binding site.

The protein belongs to the ketol-acid reductoisomerase family. The cofactor is Mg(2+).

It carries out the reaction (2R)-2,3-dihydroxy-3-methylbutanoate + NADP(+) = (2S)-2-acetolactate + NADPH + H(+). It catalyses the reaction (2R,3R)-2,3-dihydroxy-3-methylpentanoate + NADP(+) = (S)-2-ethyl-2-hydroxy-3-oxobutanoate + NADPH + H(+). It participates in amino-acid biosynthesis; L-isoleucine biosynthesis; L-isoleucine from 2-oxobutanoate: step 2/4. Its pathway is amino-acid biosynthesis; L-valine biosynthesis; L-valine from pyruvate: step 2/4. Functionally, involved in the biosynthesis of branched-chain amino acids (BCAA). Catalyzes an alkyl-migration followed by a ketol-acid reduction of (S)-2-acetolactate (S2AL) to yield (R)-2,3-dihydroxy-isovalerate. In the isomerase reaction, S2AL is rearranged via a Mg-dependent methyl migration to produce 3-hydroxy-3-methyl-2-ketobutyrate (HMKB). In the reductase reaction, this 2-ketoacid undergoes a metal-dependent reduction by NADPH to yield (R)-2,3-dihydroxy-isovalerate. This is Ketol-acid reductoisomerase (NADP(+)) from Parasynechococcus marenigrum (strain WH8102).